A 505-amino-acid polypeptide reads, in one-letter code: Monocarboxylate transporter 6 (505 aa).

Topologically, residues 1 to 17 (MPQALERADGSWAWVVL) are cytoplasmic. The helical transmembrane segment at 18–38 (LATMVTQGLTLGFPTCIGIFF) threads the bilayer. The Extracellular portion of the chain corresponds to 39 to 53 (TELQWEFQASNSETS). A helical membrane pass occupies residues 54–74 (WFPSILTAVLHMAGPLCSILV). Residues 75-80 (GRFGCR) lie on the Cytoplasmic side of the membrane. A helical membrane pass occupies residues 81–101 (VTVMLGGVLASLGMVASSFSH). Residues 102–110 (NLSQLYFTA) lie on the Extracellular side of the membrane. A helical transmembrane segment spans residues 111-131 (GFITGLGMCFSFQSSITVLGF). Topologically, residues 132-137 (YFVRRR) are cytoplasmic. The helical transmembrane segment at 138–158 (VLANALASMGVSLGITLWPLL) threads the bilayer. Over 159–171 (SRYLLENLGWRGT) the chain is Extracellular. The helical transmembrane segment at 172–192 (FLVFGGIFLHCCICGAIIRPV) threads the bilayer. The Cytoplasmic portion of the chain corresponds to 193-239 (ATSVAPETKECPPPPPETPALGCLAACGRTIQRHLAFDILRHNTGYC). Residues 240-260 (VYILGVMWSVLGFPLPQVFLV) form a helical membrane-spanning segment. Over 261–274 (PYAMWHSVDEQQAA) the chain is Extracellular. The helical transmembrane segment at 275–295 (LLISIIGFSNIFLRPLAGLMA) threads the bilayer. The Cytoplasmic segment spans residues 296–305 (GRPAFASHRK). A helical membrane pass occupies residues 306 to 326 (YLFSLALLLNGLTNLVCAASG). Residues 327 to 329 (DFW) lie on the Extracellular side of the membrane. Residues 330–350 (VLVGYCLAYSVSMSGIGALIF) traverse the membrane as a helical segment. Topologically, residues 351 to 367 (QVLMDIVPMDQFPRALG) are cytoplasmic. Residues 368-388 (LFTVLDGLAFLISPPLAGLLL) form a helical membrane-spanning segment. The Extracellular segment spans residues 389 to 396 (DATNNFSY). Residues 397–417 (VFYMSSFFLISAALFMGGSFY) form a helical membrane-spanning segment. The Cytoplasmic segment spans residues 418-505 (ALQKKEQGKQ…QTALGWNSPT (88 aa)). Residues 443 to 464 (KDGPGKQRSPEIMCQSSRQPRP) form a disordered region.

Belongs to the major facilitator superfamily. Monocarboxylate porter (TC 2.A.1.13) family. As to expression, highly expressed in kidney.

It is found in the cell membrane. Its function is as follows. Proton-linked monocarboxylate transporter. Catalyzes the rapid transport across the plasma membrane of many monocarboxylates such as lactate, pyruvate, branched-chain oxo acids derived from leucine, valine and isoleucine, and the ketone bodies acetoacetate, beta-hydroxybutyrate and acetate. This Homo sapiens (Human) protein is Monocarboxylate transporter 6 (SLC16A5).